The following is a 92-amino-acid chain: Small ribosomal subunit protein uS19 (92 aa).

This sequence belongs to the universal ribosomal protein uS19 family.

In terms of biological role, protein S19 forms a complex with S13 that binds strongly to the 16S ribosomal RNA. This is Small ribosomal subunit protein uS19 from Bartonella bacilliformis (strain ATCC 35685 / KC583 / Herrer 020/F12,63).